A 123-amino-acid chain; its full sequence is MPTINQLIRIGRKSKKEKSNSPALKSCPQKRGVCTRVYTTTPKKPNSALRKVARVRLTNGIEVSSYIPGVGHNLQEHSVVLIRGGRVKDLPGVRYHIVRGTLDSVGVKDRKQARSKYGAKRPK.

Asp89 carries the 3-methylthioaspartic acid modification.

The protein belongs to the universal ribosomal protein uS12 family. Part of the 30S ribosomal subunit. Contacts proteins S8 and S17. May interact with IF1 in the 30S initiation complex.

Functionally, with S4 and S5 plays an important role in translational accuracy. Its function is as follows. Interacts with and stabilizes bases of the 16S rRNA that are involved in tRNA selection in the A site and with the mRNA backbone. Located at the interface of the 30S and 50S subunits, it traverses the body of the 30S subunit contacting proteins on the other side and probably holding the rRNA structure together. The combined cluster of proteins S8, S12 and S17 appears to hold together the shoulder and platform of the 30S subunit. The sequence is that of Small ribosomal subunit protein uS12 from Geobacter metallireducens (strain ATCC 53774 / DSM 7210 / GS-15).